We begin with the raw amino-acid sequence, 300 residues long: Ribokinase (300 aa).

Substrate contacts are provided by residues 11–13, 39–43, and Glu-139; these read SMD and GKGAN. ATP contacts are provided by residues Asn-183 and 210–215; that span reads TLGSEG. 2 residues coordinate K(+): Asp-236 and Thr-238. ATP is bound at residue 241 to 242; the sequence is GD. Asp-242 lines the substrate pocket. Residue Asp-242 is the Proton acceptor of the active site. K(+) contacts are provided by Ser-272, Lys-275, and Gly-277.

This sequence belongs to the carbohydrate kinase PfkB family. Ribokinase subfamily. Homodimer. Mg(2+) is required as a cofactor.

It localises to the cytoplasm. The catalysed reaction is D-ribose + ATP = D-ribose 5-phosphate + ADP + H(+). It functions in the pathway carbohydrate metabolism; D-ribose degradation; D-ribose 5-phosphate from beta-D-ribopyranose: step 2/2. With respect to regulation, activated by a monovalent cation that binds near, but not in, the active site. The most likely occupant of the site in vivo is potassium. Ion binding induces a conformational change that may alter substrate affinity. In terms of biological role, catalyzes the phosphorylation of ribose at O-5 in a reaction requiring ATP and magnesium. The resulting D-ribose-5-phosphate can then be used either for sythesis of nucleotides, histidine, and tryptophan, or as a component of the pentose phosphate pathway. The polypeptide is Ribokinase (Lactococcus lactis subsp. lactis (strain IL1403) (Streptococcus lactis)).